The sequence spans 155 residues: Putative pre-16S rRNA nuclease (155 aa).

The protein belongs to the YqgF nuclease family.

Its subcellular location is the cytoplasm. Its function is as follows. Could be a nuclease involved in processing of the 5'-end of pre-16S rRNA. In Novosphingobium aromaticivorans (strain ATCC 700278 / DSM 12444 / CCUG 56034 / CIP 105152 / NBRC 16084 / F199), this protein is Putative pre-16S rRNA nuclease.